The primary structure comprises 673 residues: DNA ligase (673 aa).

NAD(+) contacts are provided by residues 35–39 (DAEYD), 84–85 (SL), and Glu-115. Lys-117 (N6-AMP-lysine intermediate) is an active-site residue. Positions 138, 175, 292, and 316 each coordinate NAD(+). Zn(2+) contacts are provided by Cys-410, Cys-413, Cys-428, and Cys-434. The 82-residue stretch at 592–673 (PRKLPLQGLV…FLDLLERGRP (82 aa)) folds into the BRCT domain.

It belongs to the NAD-dependent DNA ligase family. LigA subfamily. Mg(2+) is required as a cofactor. It depends on Mn(2+) as a cofactor.

The catalysed reaction is NAD(+) + (deoxyribonucleotide)n-3'-hydroxyl + 5'-phospho-(deoxyribonucleotide)m = (deoxyribonucleotide)n+m + AMP + beta-nicotinamide D-nucleotide.. Its function is as follows. DNA ligase that catalyzes the formation of phosphodiester linkages between 5'-phosphoryl and 3'-hydroxyl groups in double-stranded DNA using NAD as a coenzyme and as the energy source for the reaction. It is essential for DNA replication and repair of damaged DNA. This chain is DNA ligase, found in Methylococcus capsulatus (strain ATCC 33009 / NCIMB 11132 / Bath).